A 101-amino-acid polypeptide reads, in one-letter code: Small ribosomal subunit protein uS14 (101 aa).

Belongs to the universal ribosomal protein uS14 family. Part of the 30S ribosomal subunit. Contacts proteins S3 and S10.

Binds 16S rRNA, required for the assembly of 30S particles and may also be responsible for determining the conformation of the 16S rRNA at the A site. The chain is Small ribosomal subunit protein uS14 from Chlamydia trachomatis serovar L2 (strain ATCC VR-902B / DSM 19102 / 434/Bu).